A 190-amino-acid polypeptide reads, in one-letter code: Large ribosomal subunit protein bL9 (190 aa).

This sequence belongs to the bacterial ribosomal protein bL9 family.

Its function is as follows. Binds to the 23S rRNA. The protein is Large ribosomal subunit protein bL9 of Rhodobacter capsulatus (strain ATCC BAA-309 / NBRC 16581 / SB1003).